We begin with the raw amino-acid sequence, 306 residues long: MAEKVAVLLGGTSAERDVSLLSGAAVLKGLKEAGIDAHAIDIRDFPAMRLKEEGFDKAFIALHGRGGEDGTLQGVLEFLAIPYTGSGVMASAITMDKLRSKYLWQGCGLPVSPFVALNRAQMDAGLDAQLMTSIDALGLPLFVKPSREGSSVGISRVNQASELQAALQEAFRFDDEVLVEAFLSGPEYTVGVIGTDILPSIRIQTASEFYDYDAKYLSDETQYFCPSGLSADQEAELRELTIAAWRALGCSGWGRVDVMMGADGQFYLLEVNTSPGMTSHSLVPMAANQAGMSFSQLVARILELAD.

An ATP-grasp domain is found at 101–303 (KYLWQGCGLP…FSQLVARILE (203 aa)). Position 134–189 (134–189 (IDALGLPLFVKPSREGSSVGISRVNQASELQAALQEAFRFDDEVLVEAFLSGPEYT)) interacts with ATP. Mg(2+)-binding residues include Asp257, Glu270, and Asn272.

This sequence belongs to the D-alanine--D-alanine ligase family. Requires Mg(2+) as cofactor. Mn(2+) serves as cofactor.

It localises to the cytoplasm. It catalyses the reaction 2 D-alanine + ATP = D-alanyl-D-alanine + ADP + phosphate + H(+). It participates in cell wall biogenesis; peptidoglycan biosynthesis. Functionally, cell wall formation. The polypeptide is D-alanine--D-alanine ligase (Erwinia tasmaniensis (strain DSM 17950 / CFBP 7177 / CIP 109463 / NCPPB 4357 / Et1/99)).